We begin with the raw amino-acid sequence, 359 residues long: Serum paraoxonase/arylesterase 1 (359 aa).

An intrachain disulfide couples Cys-42 to Cys-353. Asn-50 carries an N-linked (GlcNAc...) asparagine glycan. Glu-53 and Asp-54 together coordinate Ca(2+). The active-site Proton acceptor is the His-115. 4 residues coordinate Ca(2+): Ile-117, Asn-168, Asp-169, and Asn-224. N-linked (GlcNAc...) asparagine glycosylation is present at Asn-253. Residues Asp-269 and Asn-270 each contribute to the Ca(2+) site. Asn-270 and Asn-324 each carry an N-linked (GlcNAc...) asparagine glycan.

It belongs to the paraoxonase family. In terms of assembly, homodimer. Interacts with CLU. It depends on Ca(2+) as a cofactor. Post-translationally, glycosylated. The signal sequence is not cleaved. Plasma. Associated with HDL.

It is found in the secreted. The protein resides in the extracellular space. It carries out the reaction a phenyl acetate + H2O = a phenol + acetate + H(+). The catalysed reaction is An aryl dialkyl phosphate + H2O = dialkyl phosphate + an aryl alcohol.. It catalyses the reaction an N-acyl-L-homoserine lactone + H2O = an N-acyl-L-homoserine + H(+). Functionally, hydrolyzes the toxic metabolites of a variety of organophosphorus insecticides. Capable of hydrolyzing a broad spectrum of organophosphate substrates and lactones, and a number of aromatic carboxylic acid esters. Mediates an enzymatic protection of low density lipoproteins against oxidative modification. This Oryctolagus cuniculus (Rabbit) protein is Serum paraoxonase/arylesterase 1 (PON1).